We begin with the raw amino-acid sequence, 698 residues long: Probable metal-nicotianamine transporter YSL17 (698 aa).

Residues 1 to 36 (MAEEARGGQRVVVDDDREDASSVASSTERAFEGEPL) are disordered. 14 consecutive transmembrane segments (helical) span residues 43 to 63 (VTAR…VVAM), 67 to 87 (LTSG…FFLA), 114 to 134 (IAVV…YILG), 157 to 177 (IGRV…IIVP), 216 to 236 (VVTL…QWFF), 277 to 297 (MITA…WPYI), 322 to 342 (VFVG…SALV), 395 to 415 (WVAV…VPLL), 424 to 444 (VAAA…GVGV), 463 to 483 (SWVG…GIIV), 511 to 531 (VGQV…FWVF), 567 to 587 (LPDH…ALSA), 607 to 627 (IGVA…AVGC), and 644 to 664 (LLLP…SLAS).

It belongs to the YSL (TC 2.A.67.2) family. As to expression, expressed at low levels in roots.

Its subcellular location is the membrane. May be involved in the transport of nicotianamine-chelated metals. The chain is Probable metal-nicotianamine transporter YSL17 (YSL17) from Oryza sativa subsp. japonica (Rice).